The following is a 157-amino-acid chain: MNRGPPLRSRPPSSPPPASAFPGPSPFPSPSPANSLPSASPPPPTCTPSSPVSRPFASARLRTSHPPRCPHRSAPPSAPSPPFTPPHPLPTPTPSSSPRSPWLSLAPLPTSSASLASFPPPPSSFSSPSSPSTSPLSPSSSSFPSSSSFSFLVPSNS.

Positions 1–157 (MNRGPPLRSR…SFSFLVPSNS (157 aa)) are disordered. Residues 8–31 (RSRPPSSPPPASAFPGPSPFPSPS) are compositionally biased toward pro residues. Over residues 62–71 (RTSHPPRCPH) the composition is skewed to basic residues. The span at 76–95 (PSAPSPPFTPPHPLPTPTPS) shows a compositional bias: pro residues. Low complexity-rich tracts occupy residues 96–117 (SSPRSPWLSLAPLPTSSASLAS) and 124–157 (SFSSPSSPSTSPLSPSSSSFPSSSSFSFLVPSNS).

This is an uncharacterized protein from Vitis vinifera (Grape).